A 223-amino-acid polypeptide reads, in one-letter code: Ribose-5-phosphate isomerase A (223 aa).

Substrate is bound by residues 32–35, 83–86, and 96–99; these read TGST, DGAD, and KGGG. Glu-105 serves as the catalytic Proton acceptor. Position 123 (Lys-123) interacts with substrate.

It belongs to the ribose 5-phosphate isomerase family. As to quaternary structure, homodimer.

It carries out the reaction aldehydo-D-ribose 5-phosphate = D-ribulose 5-phosphate. It participates in carbohydrate degradation; pentose phosphate pathway; D-ribose 5-phosphate from D-ribulose 5-phosphate (non-oxidative stage): step 1/1. Functionally, catalyzes the reversible conversion of ribose-5-phosphate to ribulose 5-phosphate. This Acinetobacter baumannii (strain SDF) protein is Ribose-5-phosphate isomerase A.